The following is a 313-amino-acid chain: Nematocyst expressed protein 8 (313 aa).

Positions 1–19 are cleaved as a signal peptide; it reads MLRRPLLLVLFTVFSTLYA. A disordered region spans residues 24 to 56; that stretch reads GVSPPTNESEAEVSPGDDEGPPEPGNEPDVNWR. Acidic residues predominate over residues 32–44; that stretch reads SEAEVSPGDDEGP. ShKT domains follow at residues 65–99, 109–145, and 151–186; these read CKDK…CRFC, CKDL…CELC, and FKYT…CRKY. Cystine bridges form between Cys65–Cys99, Cys72–Cys92, Cys81–Cys96, Cys109–Cys145, Cys127–Cys142, Cys160–Cys179, and Cys169–Cys183. The segment covering 222 to 244 has biased composition (low complexity); that stretch reads TAAPSTQPAETTKAPPNTAAPTA. Positions 222-313 are disordered; the sequence is TAAPSTQPAE…LCDEKHSSQQ (92 aa). Over residues 245–265 the composition is skewed to pro residues; the sequence is APTPAPTPAPAPAPTPAPVAP. Residues 280–297 show a composition bias toward acidic residues; the sequence is TPEEQDDNSADESTEIEA.

This sequence belongs to the NEP3 family. Nematocytes. In late planulae, is only expressed in a handful of nematocytes in the lower pharynx. Is absent from the tentacles and outer body wall.

The protein resides in the nematocyst. Its subcellular location is the secreted. Its function is as follows. Probable toxin probably only used for predation. This is Nematocyst expressed protein 8 from Nematostella vectensis (Starlet sea anemone).